The sequence spans 1482 residues: Cystic fibrosis transmembrane conductance regulator (1482 aa).

Residues 1 to 77 (MQRSPLEKAS…KLINALRRCF (77 aa)) lie on the Cytoplasmic side of the membrane. A helical transmembrane segment spans residues 78-98 (FWRFTFYGIILYLGEVTKAVQ). Residues 81 to 365 (FTFYGIILYL…WAVQTWYDSL (285 aa)) enclose the ABC transmembrane type-1 1 domain. Topologically, residues 99 to 122 (PLLLGRIIASYDPDNKVERSIAIY) are extracellular. The chain crosses the membrane as a helical span at residues 123–146 (LAVGLCLLFVVRTLLLHPAIFGLH). At 147-195 (HIGMQMRIAMFSLIYKKTLKLSSRVLDKISIGQLVSLLSNNLNKFDEGL) the chain is on the cytoplasmic side. Residues 196–216 (ALAHFVWIAPLQVTLLMGLLW) form a helical membrane-spanning segment. Over 217 to 222 (DLLQAS) the chain is Extracellular. A helical membrane pass occupies residues 223-243 (AFSGLGVLIILACFQAGFGRM). Residues 244–298 (MMKYRDQRAGKINERLVITSEMIENIQSVKAYCWEEALEKMIENFRQSELRLTRK) are Cytoplasmic-facing. The helical transmembrane segment at 299 to 319 (AAYVRYFNSSAFFFSGFFVVF) threads the bilayer. The Extracellular segment spans residues 320–339 (LSVLPYALIKGIILRKIFTT). A helical membrane pass occupies residues 340-358 (ISFCIVLRMAVTRQFPWAV). The Cytoplasmic segment spans residues 359–859 (QTWYDSLGAI…YLRYITVHKR (501 aa)). ATP is bound by residues W401, S434, 458-465 (GSTGAGKT), and Q493. An ABC transporter 1 domain is found at 423 to 646 (NVDNSLFFSN…RPDFSSKLMG (224 aa)). C524 carries S-palmitoyl cysteine lipidation. Phosphoserine occurs at positions 549 and 660. Positions 654–832 (SAERRNSIIT…EEINEEDLKE (179 aa)) are disordered R region. The residue at position 670 (S670) is a Phosphoserine; by PKA. At S686 the chain carries Phosphoserine. K688 participates in a covalent cross-link: Glycyl lysine isopeptide (Lys-Gly) (interchain with G-Cter in ubiquitin). Residues S700 and S712 each carry the phosphoserine modification. T717 is modified (phosphothreonine). Phosphoserine is present on residues S737, S768, S796, and S814. Residues 860 to 880 (LIFVLIWCFVVFLIEVAASLV) form a helical membrane-spanning segment. In terms of domain architecture, ABC transmembrane type-1 2 spans 860–1156 (LIFVLIWCFV…AVNSSIDVDS (297 aa)). Residues 881 to 919 (LLCLLSKVSPEDKGNTTKSANDSSAVIITSTSSFYFLYI) are Extracellular-facing. N-linked (GlcNAc...) asparagine glycosylation is found at N895 and N901. A discontinuously helical membrane pass occupies residues 920 to 940 (YVGVADTFLALGLFRGLPLVH). Topologically, residues 941–991 (TLITVSKILHHKMLHSVLQAPMSTLNTLKAGGILNRFSKDIAILDDLLPLT) are cytoplasmic. The helical transmembrane segment at 992-1012 (IFDFIQLLLIVIGAVAVVSIL) threads the bilayer. The Extracellular segment spans residues 1013–1014 (KP). A helical transmembrane segment spans residues 1015 to 1035 (YIFLATVPVIVAFVLLRAYFL). The Cytoplasmic segment spans residues 1036-1096 (HTSQQLKQLE…TANWFLYLST (61 aa)). A helical transmembrane segment spans residues 1097–1117 (LRWFQMRIEMIFVIFFIAVTF). The Extracellular segment spans residues 1118–1131 (ISILTTGEGEGTVG). The chain crosses the membrane as a helical span at residues 1132–1152 (IILTLAMNIMSTLQWAVNSSI). Topologically, residues 1153 to 1482 (DVDSLMRSVS…TEEEVQDTRL (330 aa)) are cytoplasmic. One can recognise an ABC transporter 2 domain in the interval 1212 to 1445 (MTVKDLTAKY…KSLFRQAISP (234 aa)). Residues Y1221 and 1246 to 1253 (GRTGSGKS) contribute to the ATP site. The tract at residues 1388-1482 (RTLKQAFADC…TEEEVQDTRL (95 aa)) is interaction with GORASP2. A lipid anchor (S-palmitoyl cysteine) is attached at C1397. S1446 is subject to Phosphoserine. Positions 1450-1482 (KLFPHQNSGKHKSRSKITALKEETEEEVQDTRL) are disordered. A compositionally biased stretch (acidic residues) spans 1472 to 1482 (ETEEEVQDTRL). A PDZ-binding motif is present at residues 1480–1482 (TRL).

The protein belongs to the ABC transporter superfamily. ABCC family. CFTR transporter (TC 3.A.1.202) subfamily. Monomer; does not require oligomerization for channel activity. May form oligomers in the membrane. Interacts with SLC26A3, SLC26A6 and NHERF1. Interacts with SHANK2. Interacts with MYO6. Interacts (via C-terminus) with GOPC (via PDZ domain); this promotes CFTR internalization and thereby decreases channel activity. Interacts with SLC4A7 through NHERF1. Found in a complex with MYO5B and RAB11A. Interacts with ANO1. Interacts with SLC26A8. Interacts with AHCYL1; the interaction increases CFTR activity. Interacts with CSE1L. The core-glycosylated form interacts with GORASP2 (via PDZ GRASP-type 1 domain) in respone to ER stress. Interacts with MARCHF2; the interaction leads to CFTR ubiqtuitination and degradation. Interacts with ADGRG2. In terms of processing, N-glycosylated. Phosphorylated; cAMP treatment promotes phosphorylation and activates the channel. Dephosphorylation decreases the ATPase activity (in vitro). Phosphorylation at PKA sites activates the channel. Phosphorylation at PKC sites enhances the response to phosphorylation by PKA. Phosphorylated by AMPK; this inhibits channel activity. Post-translationally, ubiquitinated, leading to its degradation in the lysosome. Deubiquitination by USP10 in early endosomes enhances its endocytic recycling to the cell membrane. Ubiquitinated by RNF185 during ER stress. Ubiquitinated by MARCHF2.

Its subcellular location is the apical cell membrane. The protein resides in the early endosome membrane. It is found in the cell membrane. It localises to the recycling endosome membrane. The protein localises to the endoplasmic reticulum membrane. Its subcellular location is the nucleus. It catalyses the reaction ATP + H2O + closed Cl(-) channel = ADP + phosphate + open Cl(-) channel.. The enzyme catalyses chloride(in) = chloride(out). It carries out the reaction hydrogencarbonate(in) = hydrogencarbonate(out). The catalysed reaction is ATP + H2O = ADP + phosphate + H(+). Its function is as follows. Epithelial ion channel that plays an important role in the regulation of epithelial ion and water transport and fluid homeostasis. Mediates the transport of chloride ions across the cell membrane. Possesses an intrinsic ATPase activity and utilizes ATP to gate its channel; the passive flow of anions through the channel is gated by cycles of ATP binding and hydrolysis by the ATP-binding domains. The ion channel is also permeable to HCO(3)(-); selectivity depends on the extracellular chloride concentration. Exerts its function also by modulating the activity of other ion channels and transporters. Contributes to the regulation of the pH and the ion content of the epithelial fluid layer. Modulates the activity of the epithelial sodium channel (ENaC) complex, in part by regulating the cell surface expression of the ENaC complex. May regulate bicarbonate secretion and salvage in epithelial cells by regulating the transporter SLC4A7. Can inhibit the chloride channel activity of ANO1. Plays a role in the chloride and bicarbonate homeostasis during sperm epididymal maturation and capacitation. This is Cystic fibrosis transmembrane conductance regulator from Dasypus novemcinctus (Nine-banded armadillo).